The following is a 555-amino-acid chain: Developmental regulatory protein wetA (555 aa).

4 disordered regions span residues 113–171, 250–310, 419–488, and 508–531; these read TGHS…LMRS, QSPA…SESL, TQAV…RGGK, and GVAP…RRRK. Composition is skewed to polar residues over residues 162-171, 259-281, 293-310, 419-431, and 464-488; these read QSFSPGLMRS, PSAN…SALT, SPHS…SESL, TQAV…SPSI, and SGQS…RGGK.

This sequence belongs to the wetA family.

In terms of biological role, brlA, abaA and wetA are pivotal regulators of conidiophore development and conidium maturation. They act individually and together to regulate their own expression and that of numerous other sporulation-specific genes. Responsible for activating a set of genes whose products make up the final two conidial wall layers or direct their assembly and, through this activity, is responsible for acquisition of spore dormancy. This is Developmental regulatory protein wetA from Emericella nidulans (strain FGSC A4 / ATCC 38163 / CBS 112.46 / NRRL 194 / M139) (Aspergillus nidulans).